Reading from the N-terminus, the 297-residue chain is Urease accessory protein UreD 2 (297 aa).

It belongs to the UreD family. In terms of assembly, ureD, UreF and UreG form a complex that acts as a GTP-hydrolysis-dependent molecular chaperone, activating the urease apoprotein by helping to assemble the nickel containing metallocenter of UreC. The UreE protein probably delivers the nickel.

Its subcellular location is the cytoplasm. In terms of biological role, required for maturation of urease via the functional incorporation of the urease nickel metallocenter. The polypeptide is Urease accessory protein UreD 2 (Methylorubrum populi (strain ATCC BAA-705 / NCIMB 13946 / BJ001) (Methylobacterium populi)).